The following is an 80-amino-acid chain: Acyl carrier protein (80 aa).

In terms of domain architecture, Carrier spans 4 to 79 (EDIFSKVKDI…DAVDFIASKA (76 aa)). Ser39 is modified (O-(pantetheine 4'-phosphoryl)serine).

It belongs to the acyl carrier protein (ACP) family. 4'-phosphopantetheine is transferred from CoA to a specific serine of apo-ACP by AcpS. This modification is essential for activity because fatty acids are bound in thioester linkage to the sulfhydryl of the prosthetic group.

The protein localises to the cytoplasm. Its pathway is lipid metabolism; fatty acid biosynthesis. Functionally, carrier of the growing fatty acid chain in fatty acid biosynthesis. In Synechococcus elongatus (strain ATCC 33912 / PCC 7942 / FACHB-805) (Anacystis nidulans R2), this protein is Acyl carrier protein.